The following is a 429-amino-acid chain: Serine--tRNA ligase (429 aa).

Threonine 235–glutamate 237 contacts L-serine. Residue arginine 266–glutamate 268 coordinates ATP. Glutamate 289 is an L-serine binding site. Glutamate 353–serine 356 is an ATP binding site. Serine 389 serves as a coordination point for L-serine.

Belongs to the class-II aminoacyl-tRNA synthetase family. Type-1 seryl-tRNA synthetase subfamily. In terms of assembly, homodimer. The tRNA molecule binds across the dimer.

It localises to the cytoplasm. It catalyses the reaction tRNA(Ser) + L-serine + ATP = L-seryl-tRNA(Ser) + AMP + diphosphate + H(+). The enzyme catalyses tRNA(Sec) + L-serine + ATP = L-seryl-tRNA(Sec) + AMP + diphosphate + H(+). It participates in aminoacyl-tRNA biosynthesis; selenocysteinyl-tRNA(Sec) biosynthesis; L-seryl-tRNA(Sec) from L-serine and tRNA(Sec): step 1/1. Its function is as follows. Catalyzes the attachment of serine to tRNA(Ser). Is also able to aminoacylate tRNA(Sec) with serine, to form the misacylated tRNA L-seryl-tRNA(Sec), which will be further converted into selenocysteinyl-tRNA(Sec). The chain is Serine--tRNA ligase from Haemophilus influenzae (strain PittGG).